Consider the following 81-residue polypeptide: Elongation factor 1-beta (81 aa).

It belongs to the EF-1-beta/EF-1-delta family.

Functionally, promotes the exchange of GDP for GTP in EF-1-alpha/GDP, thus allowing the regeneration of EF-1-alpha/GTP that could then be used to form the ternary complex EF-1-alpha/GTP/AAtRNA. In Nanoarchaeum equitans (strain Kin4-M), this protein is Elongation factor 1-beta.